We begin with the raw amino-acid sequence, 142 residues long: uncharacterized protein (142 aa).

Belongs to the IIV-3 015R family.

This is an uncharacterized protein from Aedes vexans (Inland floodwater mosquito).